Here is a 456-residue protein sequence, read N- to C-terminus: Glycosyl hydrolase family 109 protein 2 (456 aa).

Residues 1–33 constitute a signal peptide (tat-type signal); sequence MSGFDRRSFLKASMVTAAATALAACASSERATG. Residues 63 to 64, Asp85, 134 to 137, 154 to 155, and Asn183 each bind NAD(+); these read ER, WAWH, and EV. Substrate-binding positions include Tyr212, Arg231, 243-246, and Tyr325; that span reads YPTH. Tyr243 is an NAD(+) binding site.

It belongs to the Gfo/Idh/MocA family. Glycosyl hydrolase 109 subfamily. Requires NAD(+) as cofactor. Post-translationally, predicted to be exported by the Tat system. The position of the signal peptide cleavage has not been experimentally proven.

Its function is as follows. Glycosidase. This chain is Glycosyl hydrolase family 109 protein 2, found in Shewanella sp. (strain MR-4).